The sequence spans 272 residues: WIMGHMVNNIKQIDEFVNLGSNAIETDVSFDKKANPEYTYHGTPCDCGRDCLRWEYFNDFVKALRTATTPGNSKYDKLFLVVFDLKTSSLYDYQASEAGTKLAKNLLQHYWNNGNNGGRAYIILSIPNLKHYKLITGFQQTLKDEGHAELLDKVGYDFSGNDDIGDVQKTYEKAGVTGHVWQSDGITNCLLRSFTRINAAVANRDSANGIINKVYYWTVDKRQTTRDTLDANVDGIMTNYPDITVEILNEDAYKTKFRIATYEDNPWETFKE.

H5 is a catalytic residue. Mg(2+) is bound by residues E25 and D27. H41 (nucleophile) is an active-site residue. 2 disulfide bridges follow: C45-C51 and C47-C189. Mg(2+) is bound at residue D84.

This sequence belongs to the arthropod phospholipase D family. Class II subfamily. Mg(2+) is required as a cofactor. As to expression, expressed by the venom gland.

It is found in the secreted. The enzyme catalyses an N-(acyl)-sphingosylphosphocholine = an N-(acyl)-sphingosyl-1,3-cyclic phosphate + choline. It carries out the reaction an N-(acyl)-sphingosylphosphoethanolamine = an N-(acyl)-sphingosyl-1,3-cyclic phosphate + ethanolamine. It catalyses the reaction a 1-acyl-sn-glycero-3-phosphocholine = a 1-acyl-sn-glycero-2,3-cyclic phosphate + choline. The catalysed reaction is a 1-acyl-sn-glycero-3-phosphoethanolamine = a 1-acyl-sn-glycero-2,3-cyclic phosphate + ethanolamine. In terms of biological role, dermonecrotic toxins cleave the phosphodiester linkage between the phosphate and headgroup of certain phospholipids (sphingolipid and lysolipid substrates), forming an alcohol (often choline) and a cyclic phosphate. This toxin acts on sphingomyelin (SM). It may also act on ceramide phosphoethanolamine (CPE), lysophosphatidylcholine (LPC) and lysophosphatidylethanolamine (LPE), but not on lysophosphatidylserine (LPS), and lysophosphatidylglycerol (LPG). It acts by transphosphatidylation, releasing exclusively cyclic phosphate products as second products. Induces dermonecrosis, hemolysis, increased vascular permeability, edema, inflammatory response, and platelet aggregation. This is Dermonecrotic toxin LvSicTox-alphaIC1biii from Loxosceles variegata (Recluse spider).